Here is a 376-residue protein sequence, read N- to C-terminus: Queuine tRNA-ribosyltransferase (376 aa).

D93 (proton acceptor) is an active-site residue. Substrate-binding positions include 93–97 (DSGGF), D147, Q190, and G217. The interval 248-254 (GVGKPDD) is RNA binding. The active-site Nucleophile is the D267. 4 residues coordinate Zn(2+): C305, C307, C310, and H336.

The protein belongs to the queuine tRNA-ribosyltransferase family. Homodimer. Within each dimer, one monomer is responsible for RNA recognition and catalysis, while the other monomer binds to the replacement base PreQ1. Zn(2+) serves as cofactor.

It carries out the reaction 7-aminomethyl-7-carbaguanine + guanosine(34) in tRNA = 7-aminomethyl-7-carbaguanosine(34) in tRNA + guanine. Its pathway is tRNA modification; tRNA-queuosine biosynthesis. In terms of biological role, catalyzes the base-exchange of a guanine (G) residue with the queuine precursor 7-aminomethyl-7-deazaguanine (PreQ1) at position 34 (anticodon wobble position) in tRNAs with GU(N) anticodons (tRNA-Asp, -Asn, -His and -Tyr). Catalysis occurs through a double-displacement mechanism. The nucleophile active site attacks the C1' of nucleotide 34 to detach the guanine base from the RNA, forming a covalent enzyme-RNA intermediate. The proton acceptor active site deprotonates the incoming PreQ1, allowing a nucleophilic attack on the C1' of the ribose to form the product. After dissociation, two additional enzymatic reactions on the tRNA convert PreQ1 to queuine (Q), resulting in the hypermodified nucleoside queuosine (7-(((4,5-cis-dihydroxy-2-cyclopenten-1-yl)amino)methyl)-7-deazaguanosine). This chain is Queuine tRNA-ribosyltransferase, found in Jannaschia sp. (strain CCS1).